The sequence spans 762 residues: Protein PHTF1 (762 aa).

The PHTF domain occupies 6–150 (RDAISWYQKK…VHCQIVSTQI (145 aa)). 3 helical membrane-spanning segments follow: residues 77 to 97 (GLVR…VTSL), 99 to 119 (IFVW…LYLM), and 121 to 141 (PIVS…MGTV). The tract at residues 152 to 184 (RPSGNNGNRRRRKLRKTVNGDGTRDNGNNSPDK) is disordered. Residues Asn-179 and Asn-224 are each glycosylated (N-linked (GlcNAc...) asparagine). 5 positions are modified to phosphoserine: Ser-272, Ser-276, Ser-277, Ser-334, and Ser-336. The disordered stretch occupies residues 345–415 (AAFSQGSRSG…NTLHSGTKRD (71 aa)). The segment covering 348 to 364 (SQGSRSGMSGGSRSLNL) has biased composition (low complexity). Asn-363 carries an N-linked (GlcNAc...) asparagine glycan. Residues 365–376 (SRRDSESTRHDS) are compositionally biased toward basic and acidic residues. N-linked (GlcNAc...) asparagine glycosylation is present at Asn-431. The next 4 helical transmembrane spans lie at 473–493 (GVGY…FPFL), 515–535 (TLFC…INFF), 611–631 (VVVS…CAQV), and 645–665 (WEFL…ASLG). Asn-674 and Asn-733 each carry an N-linked (GlcNAc...) asparagine glycan. The helical transmembrane segment at 737 to 757 (VVILSAVSGVISDLLGFNIRL) threads the bilayer.

Interacts with FEM1B. Highly expressed in testis.

Its subcellular location is the endoplasmic reticulum membrane. It is found in the golgi apparatus. It localises to the cis-Golgi network membrane. The sequence is that of Protein PHTF1 from Rattus norvegicus (Rat).